Reading from the N-terminus, the 88-residue chain is UPF0297 protein SSA_2241 (88 aa).

It belongs to the UPF0297 family.

This is UPF0297 protein SSA_2241 from Streptococcus sanguinis (strain SK36).